The chain runs to 460 residues: tRNA(Ile)-lysidine synthase (460 aa).

30-35 (SGGLDS) is a binding site for ATP.

This sequence belongs to the tRNA(Ile)-lysidine synthase family.

The protein localises to the cytoplasm. It carries out the reaction cytidine(34) in tRNA(Ile2) + L-lysine + ATP = lysidine(34) in tRNA(Ile2) + AMP + diphosphate + H(+). Functionally, ligates lysine onto the cytidine present at position 34 of the AUA codon-specific tRNA(Ile) that contains the anticodon CAU, in an ATP-dependent manner. Cytidine is converted to lysidine, thus changing the amino acid specificity of the tRNA from methionine to isoleucine. This chain is tRNA(Ile)-lysidine synthase, found in Yersinia pseudotuberculosis serotype I (strain IP32953).